The chain runs to 419 residues: MMFNNENYKDYDQELWEAIQAEEDRQEHNIELIASENMVSKAVMQAQGSVLTNKYAEGYPSKRYYGGTEYVDIVESLAIERAKKLFGAAYANVQPHSGSQANAAAYMALINAGDTVLGMDLAAGGHLTHGSPVNFSGKTYQFVGYTVDKETEKLDYAAILKQAKAVQPKLIVAGASAYSRKIDFEQFRFIADQVGAYLMVDMAHIAGLVAAGLHQNPVPYAHIVTSTTHKTLRGPRGGLLLTNDEAIARKMNAAIFPGLQGGPLEHVIAAKAVAFKEALDPAFTDYARAVIANTAAMAEVFAKDDRFRLISGGTDNHLFLVDVTKVIENGKLAQALLDEVNITLNKNAIPFETLSPFKTSGIRIGCAAITSRGMGVDESRTIAHLIIKTLVNHQQPEILEEVRYEVRRLTDAFPLYKKN.

Residues L121 and G125 to L127 each bind (6S)-5,6,7,8-tetrahydrofolate. N6-(pyridoxal phosphate)lysine is present on K230. S355 to F357 contributes to the (6S)-5,6,7,8-tetrahydrofolate binding site.

The protein belongs to the SHMT family. Homodimer. It depends on pyridoxal 5'-phosphate as a cofactor.

It is found in the cytoplasm. It carries out the reaction (6R)-5,10-methylene-5,6,7,8-tetrahydrofolate + glycine + H2O = (6S)-5,6,7,8-tetrahydrofolate + L-serine. It functions in the pathway one-carbon metabolism; tetrahydrofolate interconversion. The protein operates within amino-acid biosynthesis; glycine biosynthesis; glycine from L-serine: step 1/1. Functionally, catalyzes the reversible interconversion of serine and glycine with tetrahydrofolate (THF) serving as the one-carbon carrier. This reaction serves as the major source of one-carbon groups required for the biosynthesis of purines, thymidylate, methionine, and other important biomolecules. Also exhibits THF-independent aldolase activity toward beta-hydroxyamino acids, producing glycine and aldehydes, via a retro-aldol mechanism. This is Serine hydroxymethyltransferase from Streptococcus equi subsp. zooepidemicus (strain MGCS10565).